The following is a 172-amino-acid chain: uncharacterized protein (172 aa).

This is an uncharacterized protein from Haemophilus influenzae (strain ATCC 51907 / DSM 11121 / KW20 / Rd).